The primary structure comprises 287 residues: Protease HtpX (287 aa).

The next 2 helical transmembrane spans lie at 4-24 and 33-53; these read VFLL…VMSI and GGLL…SLAI. Zn(2+) is bound at residue histidine 139. Glutamate 140 is a catalytic residue. Histidine 143 lines the Zn(2+) pocket. 2 consecutive transmembrane segments (helical) span residues 154-174 and 195-215; these read LIQG…AGII and GVVF…VAYF. Glutamate 220 contributes to the Zn(2+) binding site.

This sequence belongs to the peptidase M48B family. The cofactor is Zn(2+).

The protein resides in the cell inner membrane. In Shewanella denitrificans (strain OS217 / ATCC BAA-1090 / DSM 15013), this protein is Protease HtpX.